Here is a 378-residue protein sequence, read N- to C-terminus: Ferredoxin--NADP reductase, embryo isozyme, chloroplastic (378 aa).

The N-terminal 62 residues, 1-62, are a transit peptide targeting the chloroplast; sequence MASALGAQAS…SRHMNKIFSM (62 aa). The FAD-binding FR-type domain maps to 93–221; sequence KEPYTATIVS…TGPSGKIMLL (129 aa). Residues 153 to 156, 174 to 176, tyrosine 180, 195 to 197, and threonine 237 each bind FAD; these read RLYS, CVR, and ICS. Residues serine 156 and arginine 176 each coordinate NADP(+). NADP(+) is bound by residues threonine 237, 269–270, 299–300, lysine 309, 337–338, and glutamate 376; these read VA, SR, and GL.

It belongs to the ferredoxin--NADP reductase type 1 family. Requires FAD as cofactor.

The protein resides in the plastid. Its subcellular location is the chloroplast. The enzyme catalyses 2 reduced [2Fe-2S]-[ferredoxin] + NADP(+) + H(+) = 2 oxidized [2Fe-2S]-[ferredoxin] + NADPH. The protein operates within energy metabolism; photosynthesis. In terms of biological role, may play a key role in regulating the relative amounts of cyclic and non-cyclic electron flow to meet the demands of the plant for ATP and reducing power. Is involved in nitrate assimilation. The sequence is that of Ferredoxin--NADP reductase, embryo isozyme, chloroplastic from Oryza sativa subsp. japonica (Rice).